The chain runs to 1077 residues: Carbamoyl phosphate synthase large chain (1077 aa).

The segment at 1–403 (MPKRTDIQSI…SLHKALRGLE (403 aa)) is carboxyphosphate synthetic domain. ATP is bound by residues arginine 129, arginine 169, glycine 175, glycine 176, glutamate 208, leucine 210, glutamate 215, glycine 241, isoleucine 242, histidine 243, glutamine 285, and glutamate 299. The ATP-grasp 1 domain maps to 133 to 328 (DKAMKSIGLE…IAKIAAKLAV (196 aa)). Mg(2+) contacts are provided by glutamine 285, glutamate 299, and asparagine 301. Glutamine 285, glutamate 299, and asparagine 301 together coordinate Mn(2+). The oligomerization domain stretch occupies residues 404–553 (VGATGFDEMV…YSSYDEECEA (150 aa)). Residues 554 to 935 (NPTDKDKIMV…AYAKAELGCG (382 aa)) form a carbamoyl phosphate synthetic domain region. Positions 678-869 (QAAVERLGLL…LAKIAARVMA (192 aa)) constitute an ATP-grasp 2 domain. Arginine 714, arginine 753, leucine 755, glutamate 760, glycine 785, valine 786, histidine 787, serine 788, glutamine 828, and glutamate 840 together coordinate ATP. Glutamine 828, glutamate 840, and asparagine 842 together coordinate Mg(2+). Residues glutamine 828, glutamate 840, and asparagine 842 each coordinate Mn(2+). The MGS-like domain maps to 936-1077 (SVYPEGGRAL…HAKVKASLEA (142 aa)). The segment at 936 to 1077 (SVYPEGGRAL…HAKVKASLEA (142 aa)) is allosteric domain.

The protein belongs to the CarB family. Composed of two chains; the small (or glutamine) chain promotes the hydrolysis of glutamine to ammonia, which is used by the large (or ammonia) chain to synthesize carbamoyl phosphate. Tetramer of heterodimers (alpha,beta)4. It depends on Mg(2+) as a cofactor. Mn(2+) is required as a cofactor.

It catalyses the reaction hydrogencarbonate + L-glutamine + 2 ATP + H2O = carbamoyl phosphate + L-glutamate + 2 ADP + phosphate + 2 H(+). The enzyme catalyses hydrogencarbonate + NH4(+) + 2 ATP = carbamoyl phosphate + 2 ADP + phosphate + 2 H(+). It functions in the pathway amino-acid biosynthesis; L-arginine biosynthesis; carbamoyl phosphate from bicarbonate: step 1/1. The protein operates within pyrimidine metabolism; UMP biosynthesis via de novo pathway; (S)-dihydroorotate from bicarbonate: step 1/3. Its function is as follows. Large subunit of the glutamine-dependent carbamoyl phosphate synthetase (CPSase). CPSase catalyzes the formation of carbamoyl phosphate from the ammonia moiety of glutamine, carbonate, and phosphate donated by ATP, constituting the first step of 2 biosynthetic pathways, one leading to arginine and/or urea and the other to pyrimidine nucleotides. The large subunit (synthetase) binds the substrates ammonia (free or transferred from glutamine from the small subunit), hydrogencarbonate and ATP and carries out an ATP-coupled ligase reaction, activating hydrogencarbonate by forming carboxy phosphate which reacts with ammonia to form carbamoyl phosphate. This Vibrio parahaemolyticus serotype O3:K6 (strain RIMD 2210633) protein is Carbamoyl phosphate synthase large chain.